The primary structure comprises 135 residues: Ribonuclease VapC9 (135 aa).

The region spanning 15–118 (VVDTNVLMYV…LKRKAKQRGI (104 aa)) is the PINc domain. Mg(2+) is bound by residues D17 and D88.

It belongs to the PINc/VapC protein family. As to quaternary structure, dimer. Mg(2+) is required as a cofactor.

In terms of biological role, toxic component of a type II toxin-antitoxin (TA) system. An RNase. The polypeptide is Ribonuclease VapC9 (Archaeoglobus fulgidus (strain ATCC 49558 / DSM 4304 / JCM 9628 / NBRC 100126 / VC-16)).